A 537-amino-acid polypeptide reads, in one-letter code: ATP synthase subunit beta (537 aa).

The interval 1–61 (MAKAATSKKE…SSPQKGGKKG (61 aa)) is disordered. The span at 7-18 (SKKEASKVEAKK) shows a compositional bias: basic and acidic residues. The span at 44–55 (NSPSRTGSSSPQ) shows a compositional bias: polar residues. 209-216 (GGAGVGKT) contacts ATP.

Belongs to the ATPase alpha/beta chains family. In terms of assembly, F-type ATPases have 2 components, CF(1) - the catalytic core - and CF(0) - the membrane proton channel. CF(1) has five subunits: alpha(3), beta(3), gamma(1), delta(1), epsilon(1). CF(0) has three main subunits: a(1), b(2) and c(9-12). The alpha and beta chains form an alternating ring which encloses part of the gamma chain. CF(1) is attached to CF(0) by a central stalk formed by the gamma and epsilon chains, while a peripheral stalk is formed by the delta and b chains.

It localises to the cell inner membrane. The catalysed reaction is ATP + H2O + 4 H(+)(in) = ADP + phosphate + 5 H(+)(out). In terms of biological role, produces ATP from ADP in the presence of a proton gradient across the membrane. The catalytic sites are hosted primarily by the beta subunits. In Bartonella bacilliformis (strain ATCC 35685 / KC583 / Herrer 020/F12,63), this protein is ATP synthase subunit beta.